Here is a 92-residue protein sequence, read N- to C-terminus: Neuropeptide ShK-like2 (92 aa).

An N-terminal signal peptide occupies residues 1–23 (MTTIRCVLFAVLLFAYCALLIKA). A propeptide spanning residues 24 to 51 (RSIDAEAEKTWQEEETKTVAEKSPLKKR) is cleaved from the precursor. Cystine bridges form between C53-C92, C61-C85, and C70-C89.

As to expression, transcripts are first expressed mostly in the endoderm (with rare ectodermal cells) in the late planulae. They are mostly expressed in endodermal ganglion cells in the body column and tentacles in primary polyps, as well as in a small number of ectodermal sensory neurons in tentacles and body wall. They are not expressed in nematocytes. In terms of tissue distribution, transcripts are predominantly expressed in ectodermal sensory neurons in early and late planulae. They are expressed in endodermal ganglion cells in the body column and tentacles in primary polyps, as well as in a small number of ectodermal neurons in pharynx. They are not expressed in nematocytes.

Functionally, in vivo, this neuropeptide induces contraction paralysis followed by death (within 2 hours) on 4 zebrafish larvae on the 15 tested. Also induces body contraction in Nematostella 11-dpf polyps. The protein is Neuropeptide ShK-like2 of Nematostella vectensis (Starlet sea anemone).